A 190-amino-acid chain; its full sequence is Putative hydrolase YdeN (190 aa).

Catalysis depends on charge relay system residues Ser71, Asp137, and His164.

It belongs to the RBBP9 family.

The polypeptide is Putative hydrolase YdeN (ydeN) (Bacillus subtilis (strain 168)).